A 490-amino-acid polypeptide reads, in one-letter code: Bifunctional protein HldE (490 aa).

Residues 1 to 330 (MLDFEQLSPA…RKILPHAFLA (330 aa)) are ribokinase. Residue 205–208 (NRKE) participates in ATP binding. Residue aspartate 275 is part of the active site. Residues 358 to 490 (FTNGCFDILH…LVARAQNGKS (133 aa)) form a cytidylyltransferase region.

This sequence in the N-terminal section; belongs to the carbohydrate kinase PfkB family. The protein in the C-terminal section; belongs to the cytidylyltransferase family. In terms of assembly, homodimer.

The enzyme catalyses D-glycero-beta-D-manno-heptose 7-phosphate + ATP = D-glycero-beta-D-manno-heptose 1,7-bisphosphate + ADP + H(+). It catalyses the reaction D-glycero-beta-D-manno-heptose 1-phosphate + ATP + H(+) = ADP-D-glycero-beta-D-manno-heptose + diphosphate. Its pathway is nucleotide-sugar biosynthesis; ADP-L-glycero-beta-D-manno-heptose biosynthesis; ADP-L-glycero-beta-D-manno-heptose from D-glycero-beta-D-manno-heptose 7-phosphate: step 1/4. The protein operates within nucleotide-sugar biosynthesis; ADP-L-glycero-beta-D-manno-heptose biosynthesis; ADP-L-glycero-beta-D-manno-heptose from D-glycero-beta-D-manno-heptose 7-phosphate: step 3/4. Catalyzes the phosphorylation of D-glycero-D-manno-heptose 7-phosphate at the C-1 position to selectively form D-glycero-beta-D-manno-heptose-1,7-bisphosphate. In terms of biological role, catalyzes the ADP transfer from ATP to D-glycero-beta-D-manno-heptose 1-phosphate, yielding ADP-D-glycero-beta-D-manno-heptose. The sequence is that of Bifunctional protein HldE from Rhodopseudomonas palustris (strain BisA53).